The following is a 91-amino-acid chain: DNA-binding protein HRL18 (91 aa).

The protein belongs to the bacterial histone-like protein family.

Its function is as follows. Histone-like DNA-binding protein which is capable of wrapping DNA to stabilize it, and thus to prevent its denaturation under extreme environmental conditions. The chain is DNA-binding protein HRL18 from Rhizobium leguminosarum.